A 399-amino-acid polypeptide reads, in one-letter code: Argininosuccinate synthase (399 aa).

Residue alanine 8–serine 16 participates in ATP binding. Residues tyrosine 87 and serine 92 each contribute to the L-citrulline site. Glycine 117 contributes to the ATP binding site. L-aspartate is bound by residues threonine 119, asparagine 123, and aspartate 124. Position 123 (asparagine 123) interacts with L-citrulline. Positions 127, 176, 185, 261, and 273 each coordinate L-citrulline.

This sequence belongs to the argininosuccinate synthase family. Type 1 subfamily. As to quaternary structure, homotetramer.

It is found in the cytoplasm. The enzyme catalyses L-citrulline + L-aspartate + ATP = 2-(N(omega)-L-arginino)succinate + AMP + diphosphate + H(+). It participates in amino-acid biosynthesis; L-arginine biosynthesis; L-arginine from L-ornithine and carbamoyl phosphate: step 2/3. The chain is Argininosuccinate synthase from Clostridioides difficile (strain 630) (Peptoclostridium difficile).